The primary structure comprises 1239 residues: MTAETQTLNFGPEWLRALSSGGSVISPPLSPALPKYKLADFRYGREEMLALYVKDNKVPSDLLDKEFLPILNDEPLLPLALVSFTEEEQRNFSMSVNSAAVLRLTNRGSSGGGGTVVGVPRGRSSSRGRGRGRGESGFYQRSFDEVESGFGRGAREMHRSQSWEERGDRRFEKPARKEPDGVRGSAWREIPDRRRRFDYDLRESKDERGYRRPRSGSGIAEDERDSLPEWCLDDAEDETGTFDSSGAFLSSKPSKKVQKEPIPEEQEIDFHPSVDGAEVSDSDGSQTEEAKETDPVQSQNQDDDLSRNDHTVQAAPSPDHKTSSPVRRTDMTLDTAHQKAVSPHLSCKMDAKSQSPSSPPTPSKHKEDAASASHQGTREKAGPCLPHPQSPALSQRSPARQPDPHIVPAMSSVPVPQLDTPTVPIHSSVCAAPGMEPVPPEPDEDGLEHLEQQAQQMVAYLQDGTLDDDHLLTKVLDQRVKGPSLDNQQKWYYKDPQGEIQGPFSNREMAEWYQAGYFPMTLLLRRVCDETFQPLGDIFKKWGRVPFSTPPTPRLGDLDPERLSRQQEITALYQMRHLHYQQLLFQQQYAVLAQQQKVALSSQQQQLPLPLQPLSMRIPEHTVIPPVVRALSVPESTSLWELPPAPTQPAVWEGSSVWDLPVEPTTQGTTREQLAQMDKVKAAKMEQERREAELRAKQEEEEQHRRKEAEEERKRREEEELARRKQEEALQRQKELALQKQMEEEERQRKKELQLLEERMRQEEERKRLEEERRRQEEERRKQLEERKRAEEERRRREEEKKREEDERRQLEEIQRKQEEAARWAREEEEAVRLLLEEARLKAEEEERNKREEAQRQKELQRQRQQQQEALRRLQLQQQQQQLAQMKLPSSSTWGQQVTPSAASQSALSLAEIQKLEEERERQKLQEQRHQQQELKALQQQQQQQQQKIPGWGTMSKPTGTTKSLLEIQQEEAGQMQKNHQQPGRNRPANISLPVAPVVNNHISSPTVGNSGSSVWGSLNNNLSPQWSSDSMSSIWGSTDVKGSSVGFWDDAVKEVAPRNATSKNKNNASKSAGSNSRQSKKVEQEEKLLRLFQGANKCQDDFTQWCEKTMHAINTAHSLDVPTFVSFLREVESPYEVHDYVCAYLGDTPEAKDFSKQFIERRTKQKTSQHRPQQDVAWVTCQTSQANSQPITLEAVQCAGRKKKKQKMVRADPSLLGFSVNASSERLNMGEIETAEDY.

Disordered stretches follow at residues 105–184 (TNRG…GVRG) and 206–409 (DERG…IVPA). Positions 153–181 (GAREMHRSQSWEERGDRRFEKPARKEPDG) are enriched in basic and acidic residues. Residues 231-240 (CLDDAEDETG) show a composition bias toward acidic residues. Positions 241 to 252 (TFDSSGAFLSSK) are enriched in polar residues. 2 stretches are compositionally biased toward basic and acidic residues: residues 257–272 (VQKE…DFHP) and 318–331 (PDHK…RTDM). The region spanning 488 to 536 (QQKWYYKDPQGEIQGPFSNREMAEWYQAGYFPMTLLLRRVCDETFQPLG) is the GYF domain. A compositionally biased stretch (basic and acidic residues) spans 678–737 (DKVKAAKMEQERREAELRAKQEEEEQHRRKEAEEERKRREEEELARRKQEEALQRQKELA). Disordered stretches follow at residues 678–749 (DKVK…ERQR), 763–812 (EEER…RQLE), 843–960 (AEEE…KPTG), and 1057–1085 (APRN…KVEQ). Residues 843 to 862 (AEEEERNKREEAQRQKELQR) are compositionally biased toward basic and acidic residues. Over residues 863-885 (QRQQQQEALRRLQLQQQQQQLAQ) the composition is skewed to low complexity. The span at 888–900 (LPSSSTWGQQVTP) shows a compositional bias: polar residues. Positions 901–913 (SAASQSALSLAEI) are enriched in low complexity. Over residues 914–933 (QKLEEERERQKLQEQRHQQQ) the composition is skewed to basic and acidic residues. Low complexity-rich tracts occupy residues 934–948 (ELKA…QQQK) and 1060–1077 (NATS…GSNS).

Belongs to the GIGYF family. As to quaternary structure, component of the 4EHP-GYF2 complex.

In terms of biological role, key component of the 4EHP-GYF2 complex, a multiprotein complex that acts as a repressor of translation initiation. In association with EIF4E2, assists ribosome-associated quality control (RQC) by sequestering the mRNA cap, blocking ribosome initiation and decreasing the translational load on problematic messages. The chain is GRB10-interacting GYF protein 2 (gigyf2) from Xenopus laevis (African clawed frog).